The chain runs to 454 residues: N-myc 2 proto-oncogene protein (454 aa).

Disordered stretches follow at residues 132–166 (SEKM…HSGT), 230–269 (VAAP…DEEE), and 325–374 (PSPY…VRRR). The segment covering 151–161 (PGAGAASPAGR) has biased composition (low complexity). Over residues 256 to 269 (ALSDEVDEEEDEEE) the composition is skewed to acidic residues. Basic and acidic residues predominate over residues 363-374 (RKSDSEDSVRRR). A bHLH domain is found at 371-423 (VRRRNHNILERQRRNDLRSSFTTLRDHVPELVKNEKAAKVVILKKACEYVHYL). The interval 423 to 444 (LQAKEHQLLMEKEKLQARQQQL) is leucine-zipper.

As to quaternary structure, efficient DNA binding requires dimerization with another bHLH protein.

The protein localises to the nucleus. The sequence is that of N-myc 2 proto-oncogene protein (N-MYC2) from Marmota monax (Woodchuck).